We begin with the raw amino-acid sequence, 555 residues long: Glutamine--tRNA ligase (555 aa).

The 'HIGH' region motif lies at 34–44; sequence PEPNGYLHIGH. Residues 35–37 and 41–47 each bind ATP; these read EPN and HIGHAKS. L-glutamine contacts are provided by Asp67 and Tyr212. ATP is bound by residues Thr231, 261-262, and 269-271; these read RL and MSK. The 'KMSKS' region motif lies at 268–272; sequence IMSKR.

This sequence belongs to the class-I aminoacyl-tRNA synthetase family. Monomer.

The protein resides in the cytoplasm. The enzyme catalyses tRNA(Gln) + L-glutamine + ATP = L-glutaminyl-tRNA(Gln) + AMP + diphosphate. This Yersinia pseudotuberculosis serotype O:1b (strain IP 31758) protein is Glutamine--tRNA ligase.